The following is a 248-amino-acid chain: tRNA pseudouridine synthase A (248 aa).

D53 serves as the catalytic Nucleophile. Y111 is a substrate binding site.

This sequence belongs to the tRNA pseudouridine synthase TruA family. Homodimer.

It carries out the reaction uridine(38/39/40) in tRNA = pseudouridine(38/39/40) in tRNA. Its function is as follows. Formation of pseudouridine at positions 38, 39 and 40 in the anticodon stem and loop of transfer RNAs. The polypeptide is tRNA pseudouridine synthase A (Streptococcus thermophilus (strain ATCC BAA-491 / LMD-9)).